A 507-amino-acid polypeptide reads, in one-letter code: Alkyl hydroperoxide reductase subunit F (507 aa).

Asp207–Ile222 is an FAD binding site. Residues Cys335 and Cys338 are joined by a disulfide bond. Asp347–Ala361 lines the NAD(+) pocket. An FAD-binding site is contributed by Thr467 to Asp477.

This sequence belongs to the class-II pyridine nucleotide-disulfide oxidoreductase family. Homodimer. It depends on FAD as a cofactor.

Its function is as follows. Serves to protect the cell against DNA damage by alkyl hydroperoxides. It can use either NADH or NADPH as electron donor for direct reduction of redox dyes or of alkyl hydroperoxides when combined with the AhpC protein. This is Alkyl hydroperoxide reductase subunit F (ahpF) from Staphylococcus aureus (strain MSSA476).